The chain runs to 492 residues: Probable ATP-citrate synthase subunit 2 (492 aa).

Residue S24 is modified to Phosphoserine.

It in the N-terminal section; belongs to the succinate/malate CoA ligase beta subunit family. This sequence in the C-terminal section; belongs to the succinate/malate CoA ligase alpha subunit family. Composed of two subunits.

It is found in the cytoplasm. The protein localises to the nucleus. The enzyme catalyses oxaloacetate + acetyl-CoA + ADP + phosphate = citrate + ATP + CoA. ATP citrate-lyase is the primary enzyme responsible for the synthesis of cytosolic acetyl-CoA. Has a central role in de novo lipid synthesis. The sequence is that of Probable ATP-citrate synthase subunit 2 from Schizosaccharomyces pombe (strain 972 / ATCC 24843) (Fission yeast).